A 418-amino-acid polypeptide reads, in one-letter code: ATP phosphoribosyltransferase regulatory subunit (418 aa).

The protein belongs to the class-II aminoacyl-tRNA synthetase family. HisZ subfamily. As to quaternary structure, heteromultimer composed of HisG and HisZ subunits.

The protein resides in the cytoplasm. Its pathway is amino-acid biosynthesis; L-histidine biosynthesis; L-histidine from 5-phospho-alpha-D-ribose 1-diphosphate: step 1/9. Its function is as follows. Required for the first step of histidine biosynthesis. May allow the feedback regulation of ATP phosphoribosyltransferase activity by histidine. The polypeptide is ATP phosphoribosyltransferase regulatory subunit (Acetivibrio thermocellus (strain ATCC 27405 / DSM 1237 / JCM 9322 / NBRC 103400 / NCIMB 10682 / NRRL B-4536 / VPI 7372) (Clostridium thermocellum)).